Here is a 297-residue protein sequence, read N- to C-terminus: Pyridoxal 5'-phosphate synthase subunit SNZ1 (297 aa).

Position 23 (D23) interacts with D-ribose 5-phosphate. The Schiff-base intermediate with D-ribose 5-phosphate role is filled by K80. G152 contributes to the D-ribose 5-phosphate binding site. R164 provides a ligand contact to D-glyceraldehyde 3-phosphate. D-ribose 5-phosphate contacts are provided by residues G214 and 235–236 (GS).

The protein belongs to the PdxS/SNZ family. As to quaternary structure, homohexamer. Interacts with AIM18.

The catalysed reaction is aldehydo-D-ribose 5-phosphate + D-glyceraldehyde 3-phosphate + L-glutamine = pyridoxal 5'-phosphate + L-glutamate + phosphate + 3 H2O + H(+). It functions in the pathway cofactor biosynthesis; pyridoxal 5'-phosphate biosynthesis. Catalyzes the formation of pyridoxal 5'-phosphate from ribose 5-phosphate (RBP), glyceraldehyde 3-phosphate (G3P) and ammonia. The ammonia is provided by a SNO isoform. Can also use ribulose 5-phosphate and dihydroxyacetone phosphate as substrates, resulting from enzyme-catalyzed isomerization of RBP and G3P, respectively. This Saccharomyces cerevisiae (strain ATCC 204508 / S288c) (Baker's yeast) protein is Pyridoxal 5'-phosphate synthase subunit SNZ1 (SNZ1).